A 283-amino-acid polypeptide reads, in one-letter code: UPF0273 protein STK_18300 (283 aa).

The 246-residue stretch at 4–249 (LRVRTYIPGF…YLRITNVKAE (246 aa)) folds into the KaiC domain. ATP is bound at residue 31 to 38 (GGPGTGKS). Residues 261–283 (MKKAVEESEEEKESIQEAEIEEE) form a disordered region. The span at 267–283 (ESEEEKESIQEAEIEEE) shows a compositional bias: acidic residues.

This sequence belongs to the UPF0273 family.

This chain is UPF0273 protein STK_18300, found in Sulfurisphaera tokodaii (strain DSM 16993 / JCM 10545 / NBRC 100140 / 7) (Sulfolobus tokodaii).